The sequence spans 375 residues: Succinyl-diaminopimelate desuccinylase (375 aa).

His-66 serves as a coordination point for Zn(2+). The active site involves Asp-68. Asp-99 is a Zn(2+) binding site. Residue Glu-133 is the Proton acceptor of the active site. Zn(2+)-binding residues include Glu-134, Glu-162, and His-348.

This sequence belongs to the peptidase M20A family. DapE subfamily. As to quaternary structure, homodimer. Requires Zn(2+) as cofactor. Co(2+) is required as a cofactor.

The catalysed reaction is N-succinyl-(2S,6S)-2,6-diaminopimelate + H2O = (2S,6S)-2,6-diaminopimelate + succinate. It participates in amino-acid biosynthesis; L-lysine biosynthesis via DAP pathway; LL-2,6-diaminopimelate from (S)-tetrahydrodipicolinate (succinylase route): step 3/3. In terms of biological role, catalyzes the hydrolysis of N-succinyl-L,L-diaminopimelic acid (SDAP), forming succinate and LL-2,6-diaminopimelate (DAP), an intermediate involved in the bacterial biosynthesis of lysine and meso-diaminopimelic acid, an essential component of bacterial cell walls. The protein is Succinyl-diaminopimelate desuccinylase of Klebsiella pneumoniae (strain 342).